We begin with the raw amino-acid sequence, 349 residues long: Phosphoribosylformylglycinamidine cyclo-ligase (349 aa).

Belongs to the AIR synthase family.

It is found in the cytoplasm. It catalyses the reaction 2-formamido-N(1)-(5-O-phospho-beta-D-ribosyl)acetamidine + ATP = 5-amino-1-(5-phospho-beta-D-ribosyl)imidazole + ADP + phosphate + H(+). It participates in purine metabolism; IMP biosynthesis via de novo pathway; 5-amino-1-(5-phospho-D-ribosyl)imidazole from N(2)-formyl-N(1)-(5-phospho-D-ribosyl)glycinamide: step 2/2. The chain is Phosphoribosylformylglycinamidine cyclo-ligase from Methanococcus vannielii (strain ATCC 35089 / DSM 1224 / JCM 13029 / OCM 148 / SB).